A 360-amino-acid polypeptide reads, in one-letter code: Phospho-N-acetylmuramoyl-pentapeptide-transferase (360 aa).

10 helical membrane passes run 21–41 (YLSF…LWMG), 73–93 (TMGG…WANL), 94–114 (SNPY…VGFV), 132–152 (WKYF…YAYG), 168–188 (VMPQ…VGTS), 199–219 (GLAI…AWAT), 236–256 (ASEL…FLWF), 263–283 (VFMG…IAVL), 288–308 (LVLV…ILQV), and 338–358 (VIVR…ATLK).

This sequence belongs to the glycosyltransferase 4 family. MraY subfamily. It depends on Mg(2+) as a cofactor.

The protein resides in the cell inner membrane. It catalyses the reaction UDP-N-acetyl-alpha-D-muramoyl-L-alanyl-gamma-D-glutamyl-meso-2,6-diaminopimeloyl-D-alanyl-D-alanine + di-trans,octa-cis-undecaprenyl phosphate = di-trans,octa-cis-undecaprenyl diphospho-N-acetyl-alpha-D-muramoyl-L-alanyl-D-glutamyl-meso-2,6-diaminopimeloyl-D-alanyl-D-alanine + UMP. Its pathway is cell wall biogenesis; peptidoglycan biosynthesis. Functionally, catalyzes the initial step of the lipid cycle reactions in the biosynthesis of the cell wall peptidoglycan: transfers peptidoglycan precursor phospho-MurNAc-pentapeptide from UDP-MurNAc-pentapeptide onto the lipid carrier undecaprenyl phosphate, yielding undecaprenyl-pyrophosphoryl-MurNAc-pentapeptide, known as lipid I. This is Phospho-N-acetylmuramoyl-pentapeptide-transferase from Vibrio vulnificus (strain YJ016).